Consider the following 336-residue polypeptide: Ketol-acid reductoisomerase (NADP(+)) (336 aa).

In terms of domain architecture, KARI N-terminal Rossmann spans 1-182; that stretch reads MAVIYYDKDA…GVTRAGVIET (182 aa). NADP(+)-binding positions include 25 to 28, Arg48, Ser51, Ser53, and 83 to 86; these read FGSQ and DEHQ. The active site involves His108. Gly134 is an NADP(+) binding site. The KARI C-terminal knotted domain maps to 183-328; it reads TFKEETETDL…KELRKMMPWL (146 aa). Residues Asp191, Glu195, Glu227, and Glu231 each coordinate Mg(2+). Ser252 contacts substrate.

Belongs to the ketol-acid reductoisomerase family. It depends on Mg(2+) as a cofactor.

It carries out the reaction (2R)-2,3-dihydroxy-3-methylbutanoate + NADP(+) = (2S)-2-acetolactate + NADPH + H(+). The enzyme catalyses (2R,3R)-2,3-dihydroxy-3-methylpentanoate + NADP(+) = (S)-2-ethyl-2-hydroxy-3-oxobutanoate + NADPH + H(+). The protein operates within amino-acid biosynthesis; L-isoleucine biosynthesis; L-isoleucine from 2-oxobutanoate: step 2/4. It functions in the pathway amino-acid biosynthesis; L-valine biosynthesis; L-valine from pyruvate: step 2/4. In terms of biological role, involved in the biosynthesis of branched-chain amino acids (BCAA). Catalyzes an alkyl-migration followed by a ketol-acid reduction of (S)-2-acetolactate (S2AL) to yield (R)-2,3-dihydroxy-isovalerate. In the isomerase reaction, S2AL is rearranged via a Mg-dependent methyl migration to produce 3-hydroxy-3-methyl-2-ketobutyrate (HMKB). In the reductase reaction, this 2-ketoacid undergoes a metal-dependent reduction by NADPH to yield (R)-2,3-dihydroxy-isovalerate. The chain is Ketol-acid reductoisomerase (NADP(+)) from Thermotoga neapolitana (strain ATCC 49049 / DSM 4359 / NBRC 107923 / NS-E).